Here is a 77-residue protein sequence, read N- to C-terminus: MPKCPKCNKEVYFAERVTSLGKDWHRPCLKCEKCGKTLTSGGHAEHEGKPYCNHPCYAAMFGPKGFGRGGAESHTFK.

Residues 2–63 (PKCPKCNKEV…HPCYAAMFGP (62 aa)) enclose the LIM zinc-binding domain. K9 and K22 each carry N6-acetyllysine. R68 carries the omega-N-methylarginine modification.

Its function is as follows. Seems to have a role in zinc absorption and may function as an intracellular zinc transport protein. The sequence is that of Cysteine-rich protein 1 (CRIP1) from Homo sapiens (Human).